A 521-amino-acid polypeptide reads, in one-letter code: Medium/long-chain-fatty-acid--[acyl-carrier-protein] ligase MbtM (521 aa).

The protein belongs to the ATP-dependent AMP-binding enzyme family.

The catalysed reaction is a long-chain fatty acid + holo-[ACP] + ATP = a long-chain fatty acyl-[ACP] + AMP + diphosphate. It catalyses the reaction a medium-chain fatty acid + holo-[ACP] + ATP = a medium-chain fatty acyl-[ACP] + AMP + diphosphate. The protein operates within siderophore biosynthesis; mycobactin biosynthesis. In terms of biological role, activates lipidic moieties required for mycobactin biosynthesis. Converts medium- to long-chain aliphatic fatty acids into acyl adenylate, which is further transferred on to the phosphopantetheine arm of the carrier protein MbtL. This Mycobacterium tuberculosis (strain CDC 1551 / Oshkosh) protein is Medium/long-chain-fatty-acid--[acyl-carrier-protein] ligase MbtM (mbtM).